The chain runs to 124 residues: Small ribosomal subunit protein uS11 (124 aa).

The disordered stretch occupies residues 102–124; the sequence is RIGRIEDATPIPHDGTTPKRKNR.

This sequence belongs to the universal ribosomal protein uS11 family. Part of the 30S ribosomal subunit.

Its function is as follows. Located on the platform of the 30S subunit. The protein is Small ribosomal subunit protein uS11 of Methanococcus maripaludis (strain C5 / ATCC BAA-1333).